We begin with the raw amino-acid sequence, 591 residues long: Autotransporter adhesin NhhA (591 aa).

The N-terminal stretch at 1–51 (MNKIYRIIWNSALNAWVVVSELTRNHTKRASATVKTAVLATLLFATVQASA) is a signal peptide. A surface exposed passenger domain region spans residues 52–503 (NNEEQEEDLY…TNVAQLKGVA (452 aa)). The tract at residues 504–591 (QNLNNRIDNV…GASASVGYQW (88 aa)) is translocator domain. Beta stranded transmembrane passes span 537-547 (GKSMMAIGGGT), 551-561 (EAGYAIGYSSI), 570-576 (KGTASGN), and 580-591 (HFGASASVGYQW).

It belongs to the autotransporter-2 (AT-2) (TC 1.B.40) family. Homotrimer.

The protein resides in the cell surface. Its subcellular location is the cell outer membrane. Its function is as follows. Involved in adhesion of capsulated meningococci to host epithelial cells. Interacts with laminin and heparan sulfate, promoting the adherence to the extracellular matrix (ECM) components. The sequence is that of Autotransporter adhesin NhhA from Neisseria meningitidis serogroup B (strain ATCC BAA-335 / MC58).